The chain runs to 386 residues: Cytochrome b (386 aa).

The next 4 membrane-spanning stretches (helical) occupy residues 32 to 52, 76 to 98, 113 to 133, and 179 to 199; these read TGSLTGLCLVIQIASGIFTAM, YLIRYIHANGASFFFVCMYGHIG, VWVIGVIIFITTMATAFTGYC, and FFALHYLCPFILAALVVMHLM. Heme b-binding residues include His-82 and His-96. 2 residues coordinate heme b: His-183 and His-197. His-202 serves as a coordination point for a ubiquinone. The next 4 helical transmembrane spans lie at 225–245, 289–309, 321–341, and 348–368; these read FVFKDLVTVFVFLLIFSTFVF, LGGVIAMFGSILITLVLPVTD, FSKTLYFTFTYNFILLGQLGQ, and FIEMGQIATFNYFTYFIVLVP.

It belongs to the cytochrome b family. Fungal cytochrome b-c1 complex contains 10 subunits; 3 respiratory subunits, 2 core proteins and 5 low-molecular weight proteins. Cytochrome b-c1 complex is a homodimer. Heme b serves as cofactor.

It localises to the mitochondrion inner membrane. Its function is as follows. Component of the ubiquinol-cytochrome c reductase complex (complex III or cytochrome b-c1 complex) that is part of the mitochondrial respiratory chain. The b-c1 complex mediates electron transfer from ubiquinol to cytochrome c. Contributes to the generation of a proton gradient across the mitochondrial membrane that is then used for ATP synthesis. This is Cytochrome b (COB) from Wickerhamomyces pijperi (Yeast).